The chain runs to 700 residues: Elongation factor G (700 aa).

The tr-type G domain maps to 10–286 (KKVRNIGIMA…AVIDYLPSPL (277 aa)). Residues 19–26 (AHIDAGKT), 83–87 (DTPGH), and 137–140 (NKMD) each bind GTP.

The protein belongs to the TRAFAC class translation factor GTPase superfamily. Classic translation factor GTPase family. EF-G/EF-2 subfamily.

The protein resides in the cytoplasm. Functionally, catalyzes the GTP-dependent ribosomal translocation step during translation elongation. During this step, the ribosome changes from the pre-translocational (PRE) to the post-translocational (POST) state as the newly formed A-site-bound peptidyl-tRNA and P-site-bound deacylated tRNA move to the P and E sites, respectively. Catalyzes the coordinated movement of the two tRNA molecules, the mRNA and conformational changes in the ribosome. The protein is Elongation factor G of Nocardia farcinica (strain IFM 10152).